Consider the following 135-residue polypeptide: Interleukin-4 (135 aa).

The signal sequence occupies residues 1–24; sequence MGLTYQLIPVLVCLLVCTSHFAHG. 3 disulfides stabilise this stretch: Cys27-Cys135, Cys48-Cys85, and Cys70-Cys105. A glycan (N-linked (GlcNAc...) asparagine) is linked at Asn62.

This sequence belongs to the IL-4/IL-13 family.

It is found in the secreted. Its function is as follows. Participates in at least several B-cell activation processes as well as of other cell types. It is a costimulator of DNA-synthesis. It induces the expression of class II MHC molecules on resting B-cells. It enhances both secretion and cell surface expression of IgE and IgG1. It also regulates the expression of the low affinity Fc receptor for IgE (CD23) on both lymphocytes and monocytes. Positively regulates IL31RA expression in macrophages. Stimulates autophagy in dendritic cells by interfering with mTORC1 signaling and through the induction of RUFY4. The protein is Interleukin-4 (IL4) of Boselaphus tragocamelus (Nilgai).